The chain runs to 209 residues: Vacuolar protein sorting-associated protein 28 homolog 1 (209 aa).

A VPS28 N-terminal domain is found at 1–99 (MEVKLWNDKR…TSGVPATVEH (99 aa)). Positions 109–205 (SSASVVAECV…SYNSFMAALP (97 aa)) constitute a VPS28 C-terminal domain.

Belongs to the VPS28 family. Component of the endosomal sorting required for transport complex I (ESCRT-I), composed of ELC, VPS28 and VPS37. Interacts with ELC.

The protein localises to the endosome. Component of the ESCRT-I complex (endosomal sorting complex required for transport I), a regulator of vesicular trafficking process. Required for the sorting of endocytic ubiquitinated cargos into multivesicular bodies (MVBs). Mediates the association to the ESCRT-0 complex. This is Vacuolar protein sorting-associated protein 28 homolog 1 (VPS28-1) from Arabidopsis thaliana (Mouse-ear cress).